We begin with the raw amino-acid sequence, 176 residues long: ATP synthase subunit b (176 aa).

Residues 18 to 38 (FGLDATVWVSIAMLVFLGILV) form a helical membrane-spanning segment.

This sequence belongs to the ATPase B chain family. F-type ATPases have 2 components, F(1) - the catalytic core - and F(0) - the membrane proton channel. F(1) has five subunits: alpha(3), beta(3), gamma(1), delta(1), epsilon(1). F(0) has three main subunits: a(1), b(2) and c(10-14). The alpha and beta chains form an alternating ring which encloses part of the gamma chain. F(1) is attached to F(0) by a central stalk formed by the gamma and epsilon chains, while a peripheral stalk is formed by the delta and b chains.

The protein localises to the cell inner membrane. F(1)F(0) ATP synthase produces ATP from ADP in the presence of a proton or sodium gradient. F-type ATPases consist of two structural domains, F(1) containing the extramembraneous catalytic core and F(0) containing the membrane proton channel, linked together by a central stalk and a peripheral stalk. During catalysis, ATP synthesis in the catalytic domain of F(1) is coupled via a rotary mechanism of the central stalk subunits to proton translocation. Its function is as follows. Component of the F(0) channel, it forms part of the peripheral stalk, linking F(1) to F(0). This Sphingopyxis alaskensis (strain DSM 13593 / LMG 18877 / RB2256) (Sphingomonas alaskensis) protein is ATP synthase subunit b.